The chain runs to 1281 residues: Angiotensin-converting enzyme (1281 aa).

An N-terminal signal peptide occupies residues 1 to 17 (MPAALGLLLPWLSLVGA). The Extracellular segment spans residues 18–1241 (LQPGLEPPQS…MSVGTKQATA (1224 aa)). Peptidase M2 domains lie at 28–610 (DPTE…LGWP) and 629–1208 (IVDE…LGWP). N42, N62, N80, N99, and N148 each carry an N-linked (GlcNAc...) asparagine glycan. C145 and C151 are disulfide-bonded. Residue Y217 coordinates chloride. N304 carries an N-linked (GlcNAc...) asparagine glycan. C345 and C363 are disulfide-bonded. H376 contributes to the Zn(2+) binding site. E377 (proton acceptor 1) is an active-site residue. Zn(2+) contacts are provided by H380 and E404. An N-linked (GlcNAc...) asparagine glycan is attached at N495. Catalysis depends on H506, which acts as the Proton donor 1. A chloride-binding site is contributed by R515. Residues C531 and C543 are joined by a disulfide bond. N-linked (GlcNAc...) asparagine glycans are attached at residues N535, N573, N601, N643, N663, and N746. Residues C743 and C749 are joined by a disulfide bond. The chloride site is built by R777 and Y815. C943 and C961 are joined by a disulfide. H974 serves as a coordination point for Zn(2+). E975 acts as the Proton acceptor 2 in catalysis. The Zn(2+) site is built by H978 and E1002. Chloride-binding residues include W1076 and R1080. H1104 (proton donor 2) is an active-site residue. R1113 contacts chloride. C1129 and C1141 form a disulfide bridge. N1177 carries N-linked (GlcNAc...) asparagine glycosylation. The segment at 1201–1240 (NGEVLGWPEYSWTPYAVTEFHAATDTADFLGMSVGTKQAT) is juxtamembrane stalk. The helical transmembrane segment at 1242 to 1262 (GAWVLLALALVFLITSIFLGV) threads the bilayer. Residues 1263 to 1281 (KLFSSRRKAFKSSSEMELK) are Cytoplasmic-facing.

It belongs to the peptidase M2 family. It depends on Zn(2+) as a cofactor. Chloride is required as a cofactor.

It localises to the cell membrane. The protein resides in the cytoplasm. The enzyme catalyses Release of a C-terminal dipeptide, oligopeptide-|-Xaa-Yaa, when Xaa is not Pro, and Yaa is neither Asp nor Glu. Thus, conversion of angiotensin I to angiotensin II, with increase in vasoconstrictor activity, but no action on angiotensin II.. It carries out the reaction angiotensin I + H2O = L-histidyl-L-leucine + angiotensin II. It catalyses the reaction bradykinin + H2O = L-Phe-L-Arg + bradykinin(1-7). The catalysed reaction is substance P + H2O = substance P(1-9) + L-Leu-L-Met-NH2. The enzyme catalyses substance P + H2O = substance P(1-8) + Gly-L-Leu-L-Met-NH2. It carries out the reaction substance P + H2O = L-Phe-L-Phe-Gly-L-Leu-L-Met-NH2 + substance P(1-6). It catalyses the reaction neurotensin + H2O = neurotensin(1-11) + L-isoleucyl-L-leucine. The catalysed reaction is goralatide + H2O = N-acetyl-L-seryl-L-aspartate + L-lysyl-L-proline. The enzyme catalyses Met-enkephalin + H2O = L-phenylalanyl-L-methionine + L-tyrosylglycylglycine. It carries out the reaction Leu-enkephalin + H2O = L-tyrosylglycylglycine + L-phenylalanyl-L-leucine. It catalyses the reaction Met-enkephalin-Arg-Phe + H2O = L-arginyl-L-phenylalanine + Met-enkephalin. Its function is as follows. Dipeptidyl carboxypeptidase that removes dipeptides from the C-terminus of a variety of circulating hormones, such as angiotensin I, bradykinin or enkephalins, thereby playing a key role in the regulation of blood pressure, electrolyte homeostasis or synaptic plasticity. Composed of two similar catalytic domains, each possessing a functional active site, with different selectivity for substrates. Plays a major role in the angiotensin-renin system that regulates blood pressure and sodium retention by the kidney by converting angiotensin I to angiotensin II, resulting in an increase of the vasoconstrictor activity of angiotensin. Also able to inactivate bradykinin, a potent vasodilator, and therefore enhance the blood pressure response. Acts as a regulator of synaptic transmission by mediating cleavage of neuropeptide hormones, such as substance P, neurotensin or enkephalins. Catalyzes degradation of different enkephalin neuropeptides (Met-enkephalin, Leu-enkephalin, Met-enkephalin-Arg-Phe and possibly Met-enkephalin-Arg-Gly-Leu). Also acts as a regulator of hematopoietic stem cell differentiation by mediating degradation of hemoregulatory peptide N-acetyl-SDKP (AcSDKP). This chain is Angiotensin-converting enzyme, found in Gallus gallus (Chicken).